Here is a 583-residue protein sequence, read N- to C-terminus: Tetratricopeptide repeat protein 39C (583 aa).

A disordered region spans residues 1–22; the sequence is MAGSEQQRPRRRDDGDSDAAAA. TPR repeat units follow at residues 315–348, 353–386, and 485–518; these read SLFM…AVDQ, HVCL…SRWS, and GLKY…ELCR.

This sequence belongs to the TTC39 family.

This is Tetratricopeptide repeat protein 39C (TTC39C) from Homo sapiens (Human).